A 73-amino-acid polypeptide reads, in one-letter code: Homeodomain-only protein (73 aa).

The segment at residues 3–62 (TEKSVTPTEEQLEILEYNFCKVNKHPDPTTLCLIAAETGLSEEQTLKWFKQRLAEWRKSE) is a DNA-binding region (homeobox; degenerate).

The protein resides in the nucleus. The protein localises to the cytoplasm. Its function is as follows. Atypical homeodomain protein which does not bind DNA and is required to modulate cardiac growth and development. May act via an interaction with SRF, leading to modulate the expression of SRF-dependent cardiac-specific genes and cardiac development. May act as a co-chaperone for HSPA1A and HSPA1B chaperone proteins and assist in chaperone-mediated protein refolding. The protein is Homeodomain-only protein (HOPX) of Gallus gallus (Chicken).